Consider the following 366-residue polypeptide: Growth hormone secretagogue receptor type 1 (366 aa).

The Extracellular segment spans residues 1-40 (MWNATLSEEPGYNLTLPDLGWDAPADNDSLTDELLPLFPA). N-linked (GlcNAc...) asparagine glycans are attached at residues N3, N13, and N27. A helical membrane pass occupies residues 41 to 66 (PLLAGVTATCVALFVVGIAGNLLTML). The Cytoplasmic portion of the chain corresponds to 67–72 (VVSRFR). A helical membrane pass occupies residues 73–96 (ELRTTTNLYLSSMAFSDLLIFLCM). The Extracellular portion of the chain corresponds to 97–117 (PLDLVRLWQYRPWNFGDLLCK). Cysteines 116 and 198 form a disulfide. The chain crosses the membrane as a helical span at residues 118 to 139 (LFQFVSESCTYATVLTITALSV). The Cytoplasmic portion of the chain corresponds to 140 to 162 (ERYFAICFPLRAKVVVTKGRVKL). Residues 163-183 (VILVIWAVAFCSAGPIFVLVG) traverse the membrane as a helical segment. Residues 184–211 (VEHENGTDPRDTNECRATEFAVRSGLLT) lie on the Extracellular side of the membrane. Residue N188 is glycosylated (N-linked (GlcNAc...) asparagine). The chain crosses the membrane as a helical span at residues 212–235 (VMVWVSSVFFFLPVFCLTVLYSLI). Over 236–263 (GRKLWRRKRGEAAVGASLRDQNHKQTVK) the chain is Cytoplasmic. Residues 264-285 (MLAVVVFAFILCWLPFHVGRYL) traverse the membrane as a helical segment. Residues 286–302 (FSKSFEPGSLEIAQISQ) are Extracellular-facing. The chain crosses the membrane as a helical span at residues 303 to 326 (YCNLVSFVLFYLSAAINPILYNIM). Residues 327-366 (SKKYRVAVFKLLGFEPFSQRKLSTLKDESSRAWTETSINT) are Cytoplasmic-facing.

This sequence belongs to the G-protein coupled receptor 1 family.

It is found in the cell membrane. Receptor for ghrelin, coupled to G-alpha-11 proteins. Stimulates growth hormone secretion. Also binds other growth hormone releasing peptides (GHRP) (e.g. Met-enkephalin and GHRP-6) as well as non-peptide, low molecular weight secretagogues (e.g. L-692,429, MK-0677, adenosine). This chain is Growth hormone secretagogue receptor type 1 (GHSR), found in Mustela putorius furo (European domestic ferret).